The following is a 64-amino-acid chain: Large ribosomal subunit protein bL35 (64 aa).

The segment covering M1 to K14 has biased composition (basic residues). The interval M1 to H30 is disordered. A compositionally biased stretch (basic and acidic residues) spans L21 to H30.

Belongs to the bacterial ribosomal protein bL35 family.

The sequence is that of Large ribosomal subunit protein bL35 from Corynebacterium efficiens (strain DSM 44549 / YS-314 / AJ 12310 / JCM 11189 / NBRC 100395).